The sequence spans 541 residues: NEDD8-activating enzyme E1 regulatory subunit (541 aa).

This sequence belongs to the ubiquitin-activating E1 family. ULA1 subfamily. As to quaternary structure, heterodimer of uba-3 and ula-1. The complex binds NEDD8 and ubc-12.

It participates in protein modification; protein neddylation. Functionally, regulatory subunit of the dimeric uba-3-ula-1 E1 enzyme. E1 activates NEDD8 by first adenylating its C-terminal glycine residue with ATP, thereafter linking this residue to the side chain of the catalytic cysteine, yielding a NEDD8-rfl-1 (uba-3) thioester and free AMP. E1 finally transfers NEDD8 to the catalytic cysteine of ubc-12. Required for rfl-1 (uba-3) nuclear localization during early embryonic development. The chain is NEDD8-activating enzyme E1 regulatory subunit (ula-1) from Caenorhabditis elegans.